The following is a 482-amino-acid chain: Dihydrolipoyllysine-residue acetyltransferase component of pyruvate dehydrogenase complex, mitochondrial (482 aa).

A mitochondrion-targeting transit peptide spans 1 to 28; that stretch reads MSAFVRVVPRISRSSVLTRSLRLQLRCY. The 77-residue stretch at 34 to 110 folds into the Lipoyl-binding domain; it reads HTIIGMPALS…PVNKPIAVYV (77 aa). The residue at position 75 (Lys-75) is an N6-lipoyllysine. A disordered region spans residues 122 to 170; that stretch reads FKLEDSGSDSKTSTKAQPAEPQAEKKQEAPAEETKTSAPEAKKSDVAAP. Over residues 143–166 the composition is skewed to basic and acidic residues; the sequence is QAEKKQEAPAEETKTSAPEAKKSD. Positions 175–212 constitute a Peripheral subunit-binding (PSBD) domain; that stretch reads FASPLAKTIALEKGISLKDVHGTGPRGRITKADIESYL. The tract at residues 214 to 251 is disordered; that stretch reads KSSKQSSQTSGAAAATPAAATSSTTAGSAPSPSSTASY. The segment covering 217–250 has biased composition (low complexity); it reads KQSSQTSGAAAATPAAATSSTTAGSAPSPSSTAS. Residues His-455 and Asp-459 contribute to the active site.

This sequence belongs to the 2-oxoacid dehydrogenase family. As to quaternary structure, eukaryotic pyruvate dehydrogenase (PDH) complexes are organized as a core consisting of the oligomeric dihydrolipoamide acetyl-transferase (E2), around which are arranged multiple copies of pyruvate dehydrogenase (E1), dihydrolipoamide dehydrogenase (E3) and protein X (E3BP) bound by non-covalent bonds. (R)-lipoate serves as cofactor.

Its subcellular location is the mitochondrion matrix. The enzyme catalyses N(6)-[(R)-dihydrolipoyl]-L-lysyl-[protein] + acetyl-CoA = N(6)-[(R)-S(8)-acetyldihydrolipoyl]-L-lysyl-[protein] + CoA. The pyruvate dehydrogenase complex catalyzes the overall conversion of pyruvate to acetyl-CoA and CO(2). The chain is Dihydrolipoyllysine-residue acetyltransferase component of pyruvate dehydrogenase complex, mitochondrial (LAT1) from Saccharomyces cerevisiae (strain ATCC 204508 / S288c) (Baker's yeast).